Here is a 709-residue protein sequence, read N- to C-terminus: Catalase HPII (709 aa).

Over residues 1–26 the composition is skewed to polar residues; that stretch reads MSEQNNEQRSQAAGTDTVDRGNSNAK. Residues 1-32 are disordered; sequence MSEQNNEQRSQAAGTDTVDRGNSNAKLEQLEA. Catalysis depends on residues H90 and N163. Y377 is a binding site for heme. The tract at residues 419–443 is disordered; sequence RASYEPNSIDGGWPKETPPAARNGG.

Belongs to the catalase family. HPII subfamily. Heme is required as a cofactor.

The protein resides in the cytoplasm. The enzyme catalyses 2 H2O2 = O2 + 2 H2O. In terms of biological role, decomposes hydrogen peroxide into water and oxygen; serves to protect cells from the toxic effects of hydrogen peroxide. The protein is Catalase HPII (katE) of Pseudomonas aeruginosa (strain ATCC 15692 / DSM 22644 / CIP 104116 / JCM 14847 / LMG 12228 / 1C / PRS 101 / PAO1).